The following is a 584-amino-acid chain: DNA damage-binding protein CMR1 (584 aa).

A compositionally biased stretch (polar residues) spans 29–44 (SATDSISREIPNQRQA). Residues 29–90 (SATDSISREI…TEEYQKVKEE (62 aa)) form a disordered region. Over residues 59 to 68 (IKKEPQEPSR) the composition is skewed to basic and acidic residues. Residues 76-110 (VTMENTEEYQKVKEEMEEAERKKKELEKLKSTRLF) are a coiled coil. WD repeat units lie at residues 226 to 267 (ITHQ…DEDP), 274 to 314 (PHGR…SSEV), 373 to 413 (LHDK…KSNS), 431 to 469 (SSRL…SELP), 506 to 549 (GRWV…LAHL), and 553 to 584 (EKVG…YLFE).

It belongs to the WD repeat DDB2/WDR76 family.

In terms of biological role, DNA-binding protein that binds to both single- and double-stranded DNA. Binds preferentially to UV-damaged DNA. May be involved in DNA-metabolic processes. This Debaryomyces hansenii (strain ATCC 36239 / CBS 767 / BCRC 21394 / JCM 1990 / NBRC 0083 / IGC 2968) (Yeast) protein is DNA damage-binding protein CMR1.